The chain runs to 171 residues: Nucleoside-triphosphatase THEP1 (171 aa).

Residues G8–S15 and V95–G102 contribute to the ATP site.

This sequence belongs to the THEP1 NTPase family.

The catalysed reaction is a ribonucleoside 5'-triphosphate + H2O = a ribonucleoside 5'-diphosphate + phosphate + H(+). Has nucleotide phosphatase activity towards ATP, GTP, CTP, TTP and UTP. May hydrolyze nucleoside diphosphates with lower efficiency. The chain is Nucleoside-triphosphatase THEP1 from Ignicoccus hospitalis (strain KIN4/I / DSM 18386 / JCM 14125).